The primary structure comprises 380 residues: Succinyl-diaminopimelate desuccinylase (380 aa).

Histidine 69 contacts Zn(2+). Aspartate 71 is an active-site residue. Aspartate 102 lines the Zn(2+) pocket. Catalysis depends on glutamate 135, which acts as the Proton acceptor. The Zn(2+) site is built by glutamate 136, glutamate 164, and histidine 353.

Belongs to the peptidase M20A family. DapE subfamily. As to quaternary structure, homodimer. Requires Zn(2+) as cofactor. Co(2+) is required as a cofactor.

It carries out the reaction N-succinyl-(2S,6S)-2,6-diaminopimelate + H2O = (2S,6S)-2,6-diaminopimelate + succinate. It functions in the pathway amino-acid biosynthesis; L-lysine biosynthesis via DAP pathway; LL-2,6-diaminopimelate from (S)-tetrahydrodipicolinate (succinylase route): step 3/3. Catalyzes the hydrolysis of N-succinyl-L,L-diaminopimelic acid (SDAP), forming succinate and LL-2,6-diaminopimelate (DAP), an intermediate involved in the bacterial biosynthesis of lysine and meso-diaminopimelic acid, an essential component of bacterial cell walls. The protein is Succinyl-diaminopimelate desuccinylase of Cereibacter sphaeroides (strain ATCC 17023 / DSM 158 / JCM 6121 / CCUG 31486 / LMG 2827 / NBRC 12203 / NCIMB 8253 / ATH 2.4.1.) (Rhodobacter sphaeroides).